Reading from the N-terminus, the 425-residue chain is Serine hydroxymethyltransferase (425 aa).

Residue 132 to 134 (GHL) coordinates (6S)-5,6,7,8-tetrahydrofolate. Lys237 carries the post-translational modification N6-(pyridoxal phosphate)lysine.

Belongs to the SHMT family. In terms of assembly, homodimer. Requires pyridoxal 5'-phosphate as cofactor.

It is found in the cytoplasm. The catalysed reaction is (6R)-5,10-methylene-5,6,7,8-tetrahydrofolate + glycine + H2O = (6S)-5,6,7,8-tetrahydrofolate + L-serine. It participates in one-carbon metabolism; tetrahydrofolate interconversion. The protein operates within amino-acid biosynthesis; glycine biosynthesis; glycine from L-serine: step 1/1. In terms of biological role, catalyzes the reversible interconversion of serine and glycine with tetrahydrofolate (THF) serving as the one-carbon carrier. This reaction serves as the major source of one-carbon groups required for the biosynthesis of purines, thymidylate, methionine, and other important biomolecules. Also exhibits THF-independent aldolase activity toward beta-hydroxyamino acids, producing glycine and aldehydes, via a retro-aldol mechanism. In Wolbachia sp. subsp. Brugia malayi (strain TRS), this protein is Serine hydroxymethyltransferase.